The chain runs to 343 residues: UDP-3-O-acylglucosamine N-acyltransferase (343 aa).

Catalysis depends on His237, which acts as the Proton acceptor.

This sequence belongs to the transferase hexapeptide repeat family. LpxD subfamily. In terms of assembly, homotrimer.

The catalysed reaction is a UDP-3-O-[(3R)-3-hydroxyacyl]-alpha-D-glucosamine + a (3R)-hydroxyacyl-[ACP] = a UDP-2-N,3-O-bis[(3R)-3-hydroxyacyl]-alpha-D-glucosamine + holo-[ACP] + H(+). Its pathway is bacterial outer membrane biogenesis; LPS lipid A biosynthesis. In terms of biological role, catalyzes the N-acylation of UDP-3-O-acylglucosamine using 3-hydroxyacyl-ACP as the acyl donor. Is involved in the biosynthesis of lipid A, a phosphorylated glycolipid that anchors the lipopolysaccharide to the outer membrane of the cell. This is UDP-3-O-acylglucosamine N-acyltransferase from Synechococcus sp. (strain JA-3-3Ab) (Cyanobacteria bacterium Yellowstone A-Prime).